The primary structure comprises 557 residues: Hepatocyte nuclear factor 1-beta (557 aa).

The dimerization stretch occupies residues 1–31; the sequence is MVSKLTSLQQELLSALLSSGVTKEVLVQALE. Residues 1–32 enclose the HNF-p1 domain; it reads MVSKLTSLQQELLSALLSSGVTKEVLVQALEE. A phosphoserine mark is found at serine 49, serine 52, serine 75, and serine 80. Residues 64–85 form a disordered region; the sequence is TLTNGHAKGRLSGDEGSEDGDD. The 96-residue stretch at 93–188 folds into the POU-specific atypical domain; it reads KELQALNTEE…ILRQFNQTVQ (96 aa). Positions 231–311 form a DNA-binding region, homeobox; HNF1-type; it reads MRRNRFKWGP…NRRKEEAFRQ (81 aa). Residues 324–352 are disordered; sequence HSLNPLLSHGSPHHQPSSSPPNKLSGVRY. The span at 328-344 shows a compositional bias: low complexity; sequence PLLSHGSPHHQPSSSPP.

The protein belongs to the HNF1 homeobox family. In terms of assembly, binds DNA as a dimer. Can form homodimer or heterodimer with HNF1-alpha. Interacts (via HNF-p1 domain) with PCBD1; the interaction increases its transactivation activity.

The protein localises to the nucleus. Functionally, transcription factor that binds to the inverted palindrome 5'-GTTAATNATTAAC-3'. Binds to the FPC element in the cAMP regulatory unit of the PLAU gene. Transcriptional activity is increased by coactivator PCBD1. The polypeptide is Hepatocyte nuclear factor 1-beta (HNF1B) (Homo sapiens (Human)).